Here is a 151-residue protein sequence, read N- to C-terminus: Arginine repressor (151 aa).

This sequence belongs to the ArgR family.

The protein resides in the cytoplasm. The protein operates within amino-acid biosynthesis; L-arginine biosynthesis [regulation]. Regulates arginine biosynthesis genes. This is Arginine repressor from Enterococcus faecalis (strain ATCC 700802 / V583).